Here is a 106-residue protein sequence, read N- to C-terminus: Iron-sulfur cluster assembly protein CyaY (106 aa).

The protein belongs to the frataxin family.

Involved in iron-sulfur (Fe-S) cluster assembly. May act as a regulator of Fe-S biogenesis. The sequence is that of Iron-sulfur cluster assembly protein CyaY from Escherichia fergusonii (strain ATCC 35469 / DSM 13698 / CCUG 18766 / IAM 14443 / JCM 21226 / LMG 7866 / NBRC 102419 / NCTC 12128 / CDC 0568-73).